The chain runs to 57 residues: Large ribosomal subunit protein eL20 (57 aa).

This sequence belongs to the eukaryotic ribosomal protein eL20 family. In terms of assembly, part of the 50S ribosomal subunit. Binds 23S rRNA.

The protein is Large ribosomal subunit protein eL20 of Halorhabdus utahensis (strain DSM 12940 / JCM 11049 / AX-2).